Consider the following 114-residue polypeptide: MGVMEILVSTLEAVPGYRVAQVLGVVKGSTVRSKHLGKDLLAGLRTLVGGELPEYTEMLQEAREVAEARMLEEARRLGAHAVLGVRYATASVMQGAAEILVYGTAVRLEPARER.

Belongs to the UPF0145 family.

The chain is UPF0145 protein TT_C1581 from Thermus thermophilus (strain ATCC BAA-163 / DSM 7039 / HB27).